A 437-amino-acid chain; its full sequence is Adenylosuccinate synthetase (437 aa).

Residues 12 to 18 (GDEGKGK) and 40 to 42 (GHT) contribute to the GTP site. Residue aspartate 13 is the Proton acceptor of the active site. Residues aspartate 13 and glycine 40 each contribute to the Mg(2+) site. IMP-binding positions include 13-16 (DEGK), 38-41 (NAGH), threonine 131, arginine 145, glutamine 225, and threonine 240. Catalysis depends on histidine 41, which acts as the Proton donor. The interval 281-304 (TELLGADGKPDADGERLGTRGHEF) is disordered. Residues 288–303 (GKPDADGERLGTRGHE) are compositionally biased toward basic and acidic residues. 306 to 312 (TTTGRQR) contributes to the substrate binding site. An IMP-binding site is contributed by arginine 310. GTP contacts are provided by residues arginine 312, 338–340 (KLD), and 420–422 (STS).

The protein belongs to the adenylosuccinate synthetase family. Homodimer. Mg(2+) serves as cofactor.

It is found in the cytoplasm. The catalysed reaction is IMP + L-aspartate + GTP = N(6)-(1,2-dicarboxyethyl)-AMP + GDP + phosphate + 2 H(+). Its pathway is purine metabolism; AMP biosynthesis via de novo pathway; AMP from IMP: step 1/2. Its function is as follows. Plays an important role in the de novo pathway of purine nucleotide biosynthesis. Catalyzes the first committed step in the biosynthesis of AMP from IMP. This chain is Adenylosuccinate synthetase, found in Ruegeria sp. (strain TM1040) (Silicibacter sp.).